The chain runs to 146 residues: Putative pre-16S rRNA nuclease (146 aa).

Belongs to the YqgF nuclease family.

It is found in the cytoplasm. In terms of biological role, could be a nuclease involved in processing of the 5'-end of pre-16S rRNA. In Pseudomonas savastanoi pv. phaseolicola (strain 1448A / Race 6) (Pseudomonas syringae pv. phaseolicola (strain 1448A / Race 6)), this protein is Putative pre-16S rRNA nuclease.